We begin with the raw amino-acid sequence, 416 residues long: Tryptophan synthase beta chain (416 aa).

At Lys-98 the chain carries N6-(pyridoxal phosphate)lysine.

This sequence belongs to the TrpB family. As to quaternary structure, tetramer of two alpha and two beta chains. Requires pyridoxal 5'-phosphate as cofactor.

It catalyses the reaction (1S,2R)-1-C-(indol-3-yl)glycerol 3-phosphate + L-serine = D-glyceraldehyde 3-phosphate + L-tryptophan + H2O. Its pathway is amino-acid biosynthesis; L-tryptophan biosynthesis; L-tryptophan from chorismate: step 5/5. Its function is as follows. The beta subunit is responsible for the synthesis of L-tryptophan from indole and L-serine. The chain is Tryptophan synthase beta chain from Ruegeria pomeroyi (strain ATCC 700808 / DSM 15171 / DSS-3) (Silicibacter pomeroyi).